The chain runs to 224 residues: Flagellar L-ring protein (224 aa).

The signal sequence occupies residues 1 to 15; that stretch reads MARYFILAAALLLTA. A lipid anchor (N-palmitoyl cysteine) is attached at Cys16. Residue Cys16 is the site of S-diacylglycerol cysteine attachment.

It belongs to the FlgH family. As to quaternary structure, the basal body constitutes a major portion of the flagellar organelle and consists of four rings (L,P,S, and M) mounted on a central rod.

The protein resides in the cell outer membrane. It is found in the bacterial flagellum basal body. Its function is as follows. Assembles around the rod to form the L-ring and probably protects the motor/basal body from shearing forces during rotation. The polypeptide is Flagellar L-ring protein (Shewanella sp. (strain MR-4)).